Reading from the N-terminus, the 742-residue chain is Synaptic vesicle glycoprotein 2A (742 aa).

The interaction with SYT1 stretch occupies residues 1–57 (MEEGFRDRAAFIRGAKDIAKEVKKHAAKKVVKGLDRVQDEYSRRSYSRFEEEEDDDD). Residues 1–169 (MEEGFRDRAA…GHGRFQWTLY (169 aa)) are Cytoplasmic-facing. Positions 40–49 (EYSRRSYSRF) are enriched in basic and acidic residues. Residues 40–145 (EYSRRSYSRF…RGEAQRRKDR (106 aa)) are disordered. Phosphoserine occurs at positions 80 and 81. T84 carries the post-translational modification Phosphothreonine. Residues 122 to 137 (VRGGLSDGEGPPGGRG) show a composition bias toward gly residues. Position 127 is a phosphoserine (S127). Residues 170 to 190 (FVLGLALMADGVEVFVVGFVL) traverse the membrane as a helical segment. At 191–205 (PSAEKDMCLSDSNKG) the chain is on the extracellular side. A helical transmembrane segment spans residues 206-226 (MLGLIVYLGMMVGAFLWGGLA). The Cytoplasmic portion of the chain corresponds to 227–233 (DRLGRRQ). A helical transmembrane segment spans residues 234-254 (CLLISLSVNSVFAFFSSFVQG). At 255–262 (YGTFLFCR) the chain is on the extracellular side. A helical membrane pass occupies residues 263–283 (LLSGVGIGGSIPIVFSYFSEF). Topologically, residues 284-294 (LAQEKRGEHLS) are cytoplasmic. The helical transmembrane segment at 295–315 (WLCMFWMIGGVYAAAMAWAII) threads the bilayer. Topologically, residues 316-334 (PHYGWSFQMGSAYQFHSWR) are extracellular. The chain crosses the membrane as a helical span at residues 335 to 355 (VFVLVCAFPSVFAIGALTTQP). Topologically, residues 356–447 (ESPRFFLENG…CFSPEYRRIT (92 aa)) are cytoplasmic. Position 393 is a phosphoserine (S393). Residues 448–468 (LMMMGVWFTMSFSYYGLTVWF) traverse the membrane as a helical segment. At 469–598 (PDMIRHLQAV…GTGEGAYMVY (130 aa)) the chain is on the extracellular side. Y480 bears the Phosphotyrosine mark. 2 N-linked (GlcNAc...) asparagine glycosylation sites follow: N498 and N548. N-linked (GlcNAc...) asparagine; alternate glycosylation is present at N573. N573 is a glycosylation site (N-linked (HexNAc...) asparagine; alternate). Residues 599-619 (FVSFLGTLAVLPGNIVSALLM) traverse the membrane as a helical segment. Residues 620–626 (DKIGRLR) lie on the Cytoplasmic side of the membrane. A helical transmembrane segment spans residues 627 to 647 (MLAGSSVLSCVSCFFLSFGNS). Topologically, residues 648 to 651 (ESAM) are extracellular. A helical membrane pass occupies residues 652–672 (IALLCLFGGVSIASWNALDVL). The Cytoplasmic portion of the chain corresponds to 673–685 (TVELYPSDKRTTA). The helical transmembrane segment at 686–708 (FGFLNALCKLAAVLGISIFTSFV) threads the bilayer. Over 709–712 (GITK) the chain is Extracellular. Residues 713–731 (AAPILFASAALALGSSLAL) traverse the membrane as a helical segment. The Cytoplasmic portion of the chain corresponds to 732 to 742 (KLPETRGQVLQ).

It belongs to the major facilitator superfamily. In terms of assembly, interacts with SYT1/synaptotagmin-1 in a calcium-dependent manner. Binds the adapter protein complex AP-2. (Microbial infection) Interacts with C.botulinum neurotoxin type A1 and type A2 (BoNT/A, botA). Interaction is improved by glycosylation of SV2. As to quaternary structure, (Microbial infection) Copurifies with C.botulinum neurotoxin type B (BoNT/B, botB) and synaptotagmin 1 (SYT1). Interaction does not require glycosylation of SV2 or SYT1 proteins. Another group finds only copurification with SYT1 and SYT2. In terms of assembly, (Microbial infection) Interacts with C.botulinum neurotoxin type E (BoNT/E). Interaction requires glycosylation of SV2 proteins. (Microbial infection) Copurifies with C.botulinum neurotoxin type F (BoNT/F) and synaptotagmin 1 (SYT2). Another group finds only copurification with BoNT/F. Interaction requires SV2 glycosylation. Post-translationally, phosphorylation by CK1 of the N-terminal cytoplasmic domain regulates interaction with SYT1. N-glycosylated, on at least 3 residues. In terms of tissue distribution, widely expressed throughout the brain (at protein level). Expressed by neural and endocrine cells of brain and spinal cord.

It localises to the presynapse. The protein localises to the cytoplasmic vesicle. The protein resides in the secretory vesicle. It is found in the synaptic vesicle membrane. Functionally, plays a role in the control of regulated secretion in neural and endocrine cells, enhancing selectively low-frequency neurotransmission. Positively regulates vesicle fusion by maintaining the readily releasable pool of secretory vesicles. In terms of biological role, (Microbial infection) Receptor for C.botulinum neurotoxin type A (BoNT/A, botA); the toxin binds via extracellular loop 4. Restores uptake of BoNT/A in mouse cells that are deleted for SV2 receptor. Glycosylation of Asn-573 is not essential for receptor activity, but enhances uptake. Also serves as a receptor for the closely related C.botulinum neurotoxin type A2; glycosylation is not essential but enhances the interaction. Its function is as follows. Possible receptor for C.botulinum neurotoxin type D (BoNT/D, botD); BoNT/D does not bind to extracellular loop 4 as do BoNT/A and BoNT/E, nor to loop 1 or loop 3. Another group does not find a convincing interaction with SV2. (Microbial infection) Receptor for C.botulinum neurotoxin type E (BoNT/E); the toxin probably binds via extracellular loop 4 and requires glycosylation of Asn-573. Restores uptake of BoNT/E in mouse cells that are deleted for SV2 receptor. Functionally, (Microbial infection) Receptor for C.botulinum neurotoxin type F (BoNT/F). Binding requires glycosylation of Asn-573. This chain is Synaptic vesicle glycoprotein 2A (Sv2a), found in Rattus norvegicus (Rat).